The chain runs to 102 residues: Small ribosomal subunit protein uS10 (102 aa).

This sequence belongs to the universal ribosomal protein uS10 family. In terms of assembly, part of the 30S ribosomal subunit.

Involved in the binding of tRNA to the ribosomes. The polypeptide is Small ribosomal subunit protein uS10 (Frankia alni (strain DSM 45986 / CECT 9034 / ACN14a)).